A 391-amino-acid chain; its full sequence is Pectin acetylesterase 11 (391 aa).

A signal peptide spans 1 to 23 (MTWLKQMWSSILVLAVVVIGARA). Active-site charge relay system residues include serine 171, aspartate 267, and histidine 334.

It belongs to the pectinacetylesterase family.

The protein resides in the secreted. Its subcellular location is the cell wall. Its function is as follows. Hydrolyzes acetyl esters in homogalacturonan regions of pectin. In type I primary cell wall, galacturonic acid residues of pectin can be acetylated at the O-2 and O-3 positions. Decreasing the degree of acetylation of pectin gels in vitro alters their physical properties. This chain is Pectin acetylesterase 11, found in Arabidopsis thaliana (Mouse-ear cress).